Consider the following 362-residue polypeptide: Outer membrane porin protein OmpD (362 aa).

Residues 1 to 21 (MKLKLVAVAVTSLLAAGVVNA) form the signal peptide.

It belongs to the Gram-negative porin family. In terms of assembly, homotrimer.

The protein resides in the cell outer membrane. Its function is as follows. Forms pores that allow passive diffusion of small molecules across the outer membrane. The sequence is that of Outer membrane porin protein OmpD (ompD) from Salmonella choleraesuis (strain SC-B67).